The sequence spans 462 residues: L-seryl-tRNA(Sec) selenium transferase (462 aa).

Lysine 292 is subject to N6-(pyridoxal phosphate)lysine.

It belongs to the SelA family. It depends on pyridoxal 5'-phosphate as a cofactor.

The protein localises to the cytoplasm. The catalysed reaction is L-seryl-tRNA(Sec) + selenophosphate + H(+) = L-selenocysteinyl-tRNA(Sec) + phosphate. It participates in aminoacyl-tRNA biosynthesis; selenocysteinyl-tRNA(Sec) biosynthesis; selenocysteinyl-tRNA(Sec) from L-seryl-tRNA(Sec) (bacterial route): step 1/1. In terms of biological role, converts seryl-tRNA(Sec) to selenocysteinyl-tRNA(Sec) required for selenoprotein biosynthesis. The polypeptide is L-seryl-tRNA(Sec) selenium transferase (Geobacter sulfurreducens (strain ATCC 51573 / DSM 12127 / PCA)).